The following is a 190-amino-acid chain: Myophilin (190 aa).

The disordered stretch occupies residues 1-23; the sequence is MSNVPPPSGLSYQVKKKLEGKRD. One can recognise a Calponin-homology (CH) domain in the interval 24–130; the sequence is KDQENEALEW…RTLFALGRTC (107 aa). The stretch at 165-189 is one Calponin-like repeat; sequence VSLQYGSNKGASQAGINMGKQRMIM.

The protein belongs to the calponin family. Muscle specific.

The polypeptide is Myophilin (Echinococcus granulosus (Hydatid tapeworm)).